Reading from the N-terminus, the 195-residue chain is Probable thymidylate kinase (195 aa).

7-14 provides a ligand contact to ATP; sequence GIDGVGKT.

This sequence belongs to the thymidylate kinase family.

The enzyme catalyses dTMP + ATP = dTDP + ADP. This is Probable thymidylate kinase from Methanosphaera stadtmanae (strain ATCC 43021 / DSM 3091 / JCM 11832 / MCB-3).